The primary structure comprises 362 residues: Peptide chain release factor 1 (362 aa).

Glutamine 235 is subject to N5-methylglutamine.

This sequence belongs to the prokaryotic/mitochondrial release factor family. Post-translationally, methylated by PrmC. Methylation increases the termination efficiency of RF1.

The protein resides in the cytoplasm. Peptide chain release factor 1 directs the termination of translation in response to the peptide chain termination codons UAG and UAA. The chain is Peptide chain release factor 1 from Variovorax paradoxus (strain S110).